The chain runs to 172 residues: Adenine phosphoribosyltransferase (172 aa).

This sequence belongs to the purine/pyrimidine phosphoribosyltransferase family. As to quaternary structure, homodimer.

The protein localises to the cytoplasm. It catalyses the reaction AMP + diphosphate = 5-phospho-alpha-D-ribose 1-diphosphate + adenine. It functions in the pathway purine metabolism; AMP biosynthesis via salvage pathway; AMP from adenine: step 1/1. Functionally, catalyzes a salvage reaction resulting in the formation of AMP, that is energically less costly than de novo synthesis. This is Adenine phosphoribosyltransferase from Anaeromyxobacter dehalogenans (strain 2CP-1 / ATCC BAA-258).